The primary structure comprises 445 residues: RNA-binding protein asd-2 (445 aa).

The interval 22-63 (TVIPPPPNDSGHEFIGPSSGPPQVTITPSGVQSGSANGVSTS) is disordered. Polar residues predominate over residues 42-63 (PPQVTITPSGVQSGSANGVSTS). Residues 71–128 (EYLSQLLKDKKQLAAFPNVFHHLERLADEEINKVRVVLFQCEFSKESAPLPDAEGDST) are qua1 domain. The region spanning 145-171 (NFVGRILGPRGMTAKQLEQETGCKIMV) is the KH domain. Residues 230–253 (APEGEDDLKRKQLMELAIINGTYR) form a qua2 domain; involved in RNA binding region.

Interacts with sup-12; in the presence of RNA, but with weak affinity in the absence of RNA. Isoform b: Expressed in the hypodermis and pharyngeal muscles. Isoform c: Expressed in body wall muscles and phayngeal muscles.

It is found in the nucleus. RNA-binding protein that binds to the 5'-NACUAAY-N(1,20)-UAAY-3' consensus sequence in pre-mRNA introns to promote alternative splicing. Required for mutually exclusive alternative splicing where it modulates the switch between mutually exclusive exons during pre-mRNA maturation. Involved in muscle-specific gene expression regulating the alternative splicing of genes such as let-2 and unc-60 to ensure that their respective isoforms are expressed in muscle. Promotes the removal of intron 10 from let-2 pre-mRNA to allow for the exclusive expression of the muscle-specific let-2 isoform (as opposed to the non-muscle-specific isoform expressed in embryos) in body wall muscles during late larval and adult stages of development. Binds cooperatively with RNA-binding protein sup-12 to intron 1A of the unc-60 pre-mRNA to promote alternative splicing and expression of the muscle specific isoform of unc-60. This Caenorhabditis elegans protein is RNA-binding protein asd-2.